Reading from the N-terminus, the 410-residue chain is Elongation factor Tu, chloroplastic (410 aa).

One can recognise a tr-type G domain in the interval lysine 10–glutamate 215. The segment at glycine 19–threonine 26 is G1. Glycine 19–threonine 26 contributes to the GTP binding site. Position 26 (threonine 26) interacts with Mg(2+). Residues glycine 61 to asparagine 65 are G2. The interval aspartate 82–glycine 85 is G3. Residues aspartate 82–histidine 86 and asparagine 137–aspartate 140 each bind GTP. A G4 region spans residues asparagine 137–aspartate 140. The interval serine 175–leucine 177 is G5.

The protein belongs to the TRAFAC class translation factor GTPase superfamily. Classic translation factor GTPase family. EF-Tu/EF-1A subfamily.

It is found in the plastid. The protein localises to the chloroplast. It catalyses the reaction GTP + H2O = GDP + phosphate + H(+). Functionally, GTP hydrolase that promotes the GTP-dependent binding of aminoacyl-tRNA to the A-site of ribosomes during protein biosynthesis. This chain is Elongation factor Tu, chloroplastic (tufA), found in Oltmannsiellopsis viridis (Marine flagellate).